Here is a 348-residue protein sequence, read N- to C-terminus: Fe-S cluster assembly protein DRE2 (348 aa).

The tract at residues 1 to 158 (MSQYKTGLLL…LPTFKKASSS (158 aa)) is N-terminal SAM-like domain. The interval 137 to 170 (KTNNTKLQSGSKLPTFKKASSSTSNLPSFKKADH) is disordered. A compositionally biased stretch (polar residues) spans 144-163 (QSGSKLPTFKKASSSTSNLP). A linker region spans residues 159–242 (TSNLPSFKKA…EEELIDEDGS (84 aa)). Serine 206 carries the phosphoserine modification. The [2Fe-2S] cluster site is built by cysteine 252, cysteine 263, cysteine 266, and cysteine 268. Residues 252–268 (CGKSKTKKKKACKDCTC) are fe-S binding site A. 4 residues coordinate [4Fe-4S] cluster: cysteine 311, cysteine 314, cysteine 322, and cysteine 325. 2 short sequence motifs (cx2C motif) span residues 311–314 (CGSC) and 322–325 (CSGC). The interval 311 to 325 (CGSCSLGDAFRCSGC) is fe-S binding site B.

It belongs to the anamorsin family. In terms of assembly, monomer. Interacts with TAH18. Interacts with MIA40. [2Fe-2S] cluster is required as a cofactor. It depends on [4Fe-4S] cluster as a cofactor. Ubiquitinated.

It is found in the cytoplasm. Its subcellular location is the mitochondrion intermembrane space. Functionally, component of the cytosolic iron-sulfur (Fe-S) protein assembly (CIA) machinery required for the maturation of extramitochondrial Fe-S proteins. Part of an electron transfer chain functioning in an early step of cytosolic Fe-S biogenesis, facilitating the de novo assembly of a [4Fe-4S] cluster on the scaffold complex CFD1-NBP35. Electrons are transferred to DRE2 from NADPH via the FAD- and FMN-containing protein TAH18. TAH18-DRE2 are also required for the assembly of the diferric tyrosyl radical cofactor of ribonucleotide reductase (RNR), probably by providing electrons for reduction during radical cofactor maturation in the catalytic small subunit RNR2. Has anti-apoptotic effects in the cell. Involved in negative control of H(2)O(2)-induced cell death. The polypeptide is Fe-S cluster assembly protein DRE2 (Saccharomyces cerevisiae (strain ATCC 204508 / S288c) (Baker's yeast)).